The primary structure comprises 341 residues: UDP-glucose 4-epimerase (341 aa).

The protein belongs to the polysaccharide synthase family.

The enzyme catalyses UDP-alpha-D-glucose = UDP-alpha-D-galactose. Its function is as follows. Epimerizes UDP-galactose to UDP-glucose. May contribute to formation of LPS or the exopolysaccharide slime layer by providing UDP-galactose as a substrate for either molecule. The sequence is that of UDP-glucose 4-epimerase (capD) from Rickettsia prowazekii (strain Madrid E).